A 331-amino-acid chain; its full sequence is Putative ankyrin repeat protein RBE_0261 (331 aa).

The stretch at 94–159 (QGENVIHKCV…KAKNTLLNIV (66 aa)) is one ANK repeat.

The polypeptide is Putative ankyrin repeat protein RBE_0261 (Rickettsia bellii (strain RML369-C)).